The following is a 490-amino-acid chain: Sphingomyelinase (490 aa).

The N-terminal stretch at 1 to 31 is a signal peptide; it reads MDYAKRIGQVGALAVVLGVGAAVTTHAIGSA. Residues 30–49 are disordered; it reads SAAPTDPSSSSTDSPVDACS. Over 32–136 the chain is Periplasmic; it reads APTDPSSSST…FDACDPDGNR (105 aa). A beta stranded transmembrane segment spans residues 137–145; that stretch reads MTFAVRERG. Topologically, residues 146–161 are extracellular; the sequence is APGGPQHGIVTVDQRT. The chain crosses the membrane as a beta stranded span at residues 162-168; sequence ASFIYTA. Residues 169-171 lie on the Periplasmic side of the membrane; that stretch reads DPG. Residues 172 to 182 form a beta stranded membrane-spanning segment; the sequence is FVGTDTFSVNV. Residues 183 to 187 lie on the Extracellular side of the membrane; sequence SDDTS. A beta stranded membrane pass occupies residues 188–196; that stretch reads LHVHGLAGY. Over 197-204 the chain is Periplasmic; sequence LGPFHGHD. Residues 205-213 traverse the membrane as a beta stranded segment; the sequence is DVATVTVFV. Residues 214–490 are Extracellular-facing; that stretch reads GNTPTDTISG…HYVADNVAVR (277 aa).

It belongs to the SpmT family.

The protein localises to the cell outer membrane. The catalysed reaction is a sphingomyelin + H2O = phosphocholine + an N-acylsphing-4-enine + H(+). Its function is as follows. Catalyzes the cleavage of sphingomyelin, a major lipid in eukaryotic cells, into ceramide and phosphocholine, which are then utilized by M.bovis as carbon, nitrogen and phosphorus sources, respectively. Thus, enables M.bovis to utilize sphingomyelin as a source of several essential nutrients for intracellular growth during infection. Furthermore, lyses erythrocytes and constitutes a hemolytic factor. This chain is Sphingomyelinase, found in Mycobacterium bovis (strain ATCC BAA-935 / AF2122/97).